The primary structure comprises 41 residues: U-AITX-Bg1a (41 aa).

3 disulfide bridges follow: Cys2–Cys35, Cys4–Cys28, and Cys18–Cys36.

It belongs to the sea anemone type 3 (BDS) potassium channel toxin family.

Its subcellular location is the secreted. The protein localises to the nematocyst. In terms of biological role, potently and selectively inhibits voltage-gated potassium channels Kv11/KCNH/ERG. Acts as a gating-modifier toxin that shifts the voltage-dependence of ERG activation in the positive direction and suppresses its current amplitudes elicited by strong depolarizing pulses that maximally activate the channels. The protein is U-AITX-Bg1a of Bunodosoma granuliferum (Red warty sea anemone).